The following is a 261-amino-acid chain: MSDILDKIIAVKREEIAAALKSAPLEELKLQASARDSRDFVGALRGKHAAGHAAVIAEVKKASPSKGVLRERFVPADIARSYAEHGAACLSVLTDEQFFQGSARYLEEARAACNLPVLRKDFIVDPYQVLEARAMGADAILLIAAALDTPLMVDLEAYAHSLGLAVLVEVHNRDELSAALELKTPLVGINNRNLRTFETTIDTTLGMLDAIPDDRIVVTESGILSRADVERMEAAGVHTFLVGEAFMRAENPGAELARMFF.

Belongs to the TrpC family.

It catalyses the reaction 1-(2-carboxyphenylamino)-1-deoxy-D-ribulose 5-phosphate + H(+) = (1S,2R)-1-C-(indol-3-yl)glycerol 3-phosphate + CO2 + H2O. It functions in the pathway amino-acid biosynthesis; L-tryptophan biosynthesis; L-tryptophan from chorismate: step 4/5. The polypeptide is Indole-3-glycerol phosphate synthase (Burkholderia thailandensis (strain ATCC 700388 / DSM 13276 / CCUG 48851 / CIP 106301 / E264)).